The following is a 640-amino-acid chain: SUMO-activating enzyme subunit 2 (640 aa).

ATP contacts are provided by residues 24–29 (GAGGIG), Asp48, 56–59 (NLNR), Lys72, 95–96 (SI), and 117–122 (DNRAAR). The Zn(2+) site is built by Cys158 and Cys161. Residue Lys164 forms a Glycyl lysine isopeptide (Lys-Gly) (interchain with G-Cter in SUMO1) linkage. The active-site Glycyl thioester intermediate is Cys173. Lys190 participates in a covalent cross-link: Glycyl lysine isopeptide (Lys-Gly) (interchain with G-Cter in SUMO). Positions 202-231 (ADQEVSPDRADPEAAWEPTEAEARARASNE) are disordered. Phosphoserine is present on Ser207. A compositionally biased stretch (basic and acidic residues) spans 222 to 231 (AEARARASNE). Lys236 is covalently cross-linked (Glycyl lysine isopeptide (Lys-Gly) (interchain with G-Cter in SUMO1); alternate). Glycyl lysine isopeptide (Lys-Gly) (interchain with G-Cter in SUMO2); alternate cross-links involve residues Lys236 and Lys257. Residues Lys257 and Lys271 each participate in a glycyl lysine isopeptide (Lys-Gly) (interchain with G-Cter in SUMO); alternate cross-link. At Lys271 the chain carries N6-acetyllysine; alternate. Lys275 is covalently cross-linked (Glycyl lysine isopeptide (Lys-Gly) (interchain with G-Cter in SUMO)). Lys371 is covalently cross-linked (Glycyl lysine isopeptide (Lys-Gly) (interchain with G-Cter in SUMO2)). A Glycyl lysine isopeptide (Lys-Gly) (interchain with G-Cter in SUMO1); alternate cross-link involves residue Lys420. Lys420 is covalently cross-linked (Glycyl lysine isopeptide (Lys-Gly) (interchain with G-Cter in SUMO2); alternate). Zn(2+) is bound by residues Cys441 and Cys444. Ser507 bears the Phosphoserine mark. A Glycyl lysine isopeptide (Lys-Gly) (interchain with G-Cter in SUMO2) cross-link involves residue Lys540. Residues 551–563 (PEKVGPKQAEDAA) are compositionally biased toward basic and acidic residues. Residues 551–640 (PEKVGPKQAE…EELDDVIALD (90 aa)) are disordered. Residues 565–582 (SITNGSDDGAQPSTSTAQ) show a composition bias toward polar residues. The span at 583–597 (EQDDVLIVDSDEEDS) shows a compositional bias: acidic residues. Ser592 carries the post-translational modification Phosphoserine. Residues 606 to 630 (EERSRKRKLDEKENLSAKRSRIEQK) are compositionally biased toward basic and acidic residues. Lys611 participates in a covalent cross-link: Glycyl lysine isopeptide (Lys-Gly) (interchain with G-Cter in SUMO). Lys613 participates in a covalent cross-link: Glycyl lysine isopeptide (Lys-Gly) (interchain with G-Cter in SUMO); alternate. At Lys613 the chain carries N6-acetyllysine; alternate. Glycyl lysine isopeptide (Lys-Gly) (interchain with G-Cter in SUMO) cross-links involve residues Lys617 and Lys623. The span at 631-640 (EELDDVIALD) shows a compositional bias: acidic residues.

The protein belongs to the ubiquitin-activating E1 family. As to quaternary structure, heterodimer of SAE1 and UBA2/SAE2. The heterodimer corresponds to the two domains that are encoded on a single polypeptide chain in ubiquitin-activating enzyme E1. Interacts with UBE2I. Sumoylated with SUMO1 and SUMO2/3 and by UBC9. Sumoylation at Lys-236 inhibits enzymatic activity. Sumoylation at the C-terminal lysine cluster plays an essential role in nuclear trafficking.

The protein resides in the cytoplasm. It localises to the nucleus. Its pathway is protein modification; protein sumoylation. Functionally, the heterodimer acts as an E1 ligase for SUMO1, SUMO2, SUMO3, and probably SUMO4. It mediates ATP-dependent activation of SUMO proteins followed by formation of a thioester bond between a SUMO protein and a conserved active site cysteine residue on UBA2/SAE2. The chain is SUMO-activating enzyme subunit 2 (UBA2) from Homo sapiens (Human).